The following is a 356-amino-acid chain: 3-isopropylmalate dehydrogenase (356 aa).

An NAD(+)-binding site is contributed by 73-86; it reads GTQYDGLPREKRPE. Residues Arg-93, Arg-103, Arg-131, and Asp-220 each coordinate substrate. Mg(2+)-binding residues include Asp-220, Asp-244, and Asp-248. Residue 278 to 290 coordinates NAD(+); the sequence is GSAPDIAGKGIAN.

It belongs to the isocitrate and isopropylmalate dehydrogenases family. LeuB type 1 subfamily. Homodimer. Requires Mg(2+) as cofactor. The cofactor is Mn(2+).

It localises to the cytoplasm. It carries out the reaction (2R,3S)-3-isopropylmalate + NAD(+) = 4-methyl-2-oxopentanoate + CO2 + NADH. The protein operates within amino-acid biosynthesis; L-leucine biosynthesis; L-leucine from 3-methyl-2-oxobutanoate: step 3/4. Catalyzes the oxidation of 3-carboxy-2-hydroxy-4-methylpentanoate (3-isopropylmalate) to 3-carboxy-4-methyl-2-oxopentanoate. The product decarboxylates to 4-methyl-2 oxopentanoate. This is 3-isopropylmalate dehydrogenase from Nitrosomonas europaea (strain ATCC 19718 / CIP 103999 / KCTC 2705 / NBRC 14298).